The sequence spans 826 residues: Capsid-associated protein Vp91 (826 aa).

The first 18 residues, 1–18 (MSDVVLLVLAIIFIIIFV), serve as a signal peptide directing secretion. Residues 147–196 (CVPINPCDTRAPGLYAMDEHLLDALVHSQHLDKDYTINAHLQHPTLYLRC) form a C2HC BV-type zinc finger. Intrachain disulfides connect Cys207–Cys220 and Cys260–Cys273. Residue Asn210 is glycosylated (N-linked (GlcNAc...) asparagine; by host). Residues 223–281 (NELCQGRPDGYVLDYFPETLLVNEFVECYESKHVVKQCPEQHVFDRQLMTCVQAHPCAF) form the Chitin-binding type-2 domain. 6 N-linked (GlcNAc...) asparagine; by host glycosylation sites follow: Asn333, Asn371, Asn413, Asn510, Asn520, and Asn609. The tract at residues 651-679 (GDGDHWGPDLPPPVQPDSEPDESEPEPEV) is disordered. Residues 668–677 (SEPDESEPEP) show a composition bias toward acidic residues. Asn722 carries an N-linked (GlcNAc...) asparagine; by host glycan.

The protein resides in the virion. Probable capsid-associated protein. The protein is Capsid-associated protein Vp91 of Epiphyas postvittana nucleopolyhedrovirus (EppoMNPV).